The primary structure comprises 360 residues: MALHSMRKARERWSFIRALHKGSAAAPALQKDSKKRVFSGIQPTGILHLGNYLGAIESWVRLQDEYDSVLYSIVDLHSITVPQDPAVLRQSILDMTAVLLACGINPEKSILFQQSQVSEHTQLSWILSCMVRLPRLQHLHQWKAKTTKQKHDGTVGLLTYPVLQAADILLYKSTHVPVGEDQVQHMELVQDLAQGFNKKYGEFFPVPESILTSMKKVKSLRDPSAKMSKSDPDKLATVRITDSPEEIVQKFRKAVTDFTSEVTYDPAGRAGVSNIVAVHAAVTGLSVEEVVRRSAGMNTARYKLAVADAVIEKFAPIKREIEKLKLDKDHLEKVLQIGSAKAKELAYTVCQEVKKLVGFL.

Residues 1-18 (MALHSMRKARERWSFIRA) constitute a mitochondrion transit peptide. ATP-binding positions include Q42 and 48-51 (HLGN). An L-tryptophan-binding site is contributed by D167. Residues 179 to 181 (GED), V217, and 226 to 230 (KMSKS) each bind ATP.

Belongs to the class-I aminoacyl-tRNA synthetase family. Brain.

It localises to the mitochondrion matrix. Its subcellular location is the mitochondrion. The catalysed reaction is tRNA(Trp) + L-tryptophan + ATP = L-tryptophyl-tRNA(Trp) + AMP + diphosphate + H(+). Catalyzes the attachment of tryptophan to tRNA(Trp) in a two-step reaction: tryptophan is first activated by ATP to form Trp-AMP and then transferred to the acceptor end of tRNA(Trp). This Homo sapiens (Human) protein is Tryptophan--tRNA ligase, mitochondrial (WARS2).